Consider the following 328-residue polypeptide: UDP-glucose 4-epimerase (328 aa).

Residues 20-21, 41-46, 57-58, 77-81, S123, Y149, and K153 contribute to the NAD(+) site; these read FV, VRHAVN, DI, and CAARA. 2 residues coordinate substrate: S123 and Y149. Y149 serves as the catalytic Proton acceptor. Substrate is bound by residues 198-199 and 215-217; these read GI and SIN.

This sequence belongs to the NAD(P)-dependent epimerase/dehydratase family. As to quaternary structure, homodimer. NAD(+) serves as cofactor.

It catalyses the reaction UDP-alpha-D-glucose = UDP-alpha-D-galactose. It functions in the pathway bacterial outer membrane biogenesis; LPS O-antigen biosynthesis. Functionally, involved in the metabolism of galactose. Catalyzes the conversion of UDP-galactose (UDP-Gal) to UDP-glucose (UDP-Glc) through a mechanism involving the transient reduction of NAD. The polypeptide is UDP-glucose 4-epimerase (galE) (Vibrio cholerae).